The sequence spans 212 residues: Ras-related protein RABC1 (212 aa).

An N-acetylglycine modification is found at Gly-2. GTP is bound at residue 20–27 (GDSGVGKS). The Effector region signature appears at 41–49 (LSPTIGVDF). GTP-binding positions include 67–71 (DTAGQ), 127–130 (NKVD), and 157–158 (SA). A disordered region spans residues 182–212 (TAEGSSGGKKNIFKQNPAQTTSTSSSYCCSS). Over residues 201-212 (TTSTSSSYCCSS) the composition is skewed to low complexity. 2 S-geranylgeranyl cysteine lipidation sites follow: Cys-209 and Cys-210.

The protein belongs to the small GTPase superfamily. Rab family.

The protein resides in the cell membrane. Functionally, intracellular vesicle trafficking and protein transport. The protein is Ras-related protein RABC1 (RABC1) of Arabidopsis thaliana (Mouse-ear cress).